Consider the following 89-residue polypeptide: NADH-ubiquinone oxidoreductase chain 4L (89 aa).

A run of 3 helical transmembrane segments spans residues 1–21 (MNLT…NRKN), 22–42 (IILM…LILV), and 57–77 (IYII…LVAF).

The protein belongs to the complex I subunit 4L family.

It is found in the mitochondrion membrane. The enzyme catalyses a ubiquinone + NADH + 5 H(+)(in) = a ubiquinol + NAD(+) + 4 H(+)(out). Functionally, core subunit of the mitochondrial membrane respiratory chain NADH dehydrogenase (Complex I) that is believed to belong to the minimal assembly required for catalysis. Complex I functions in the transfer of electrons from NADH to the respiratory chain. The immediate electron acceptor for the enzyme is believed to be ubiquinone. This Cryphonectria parasitica (Chestnut blight fungus) protein is NADH-ubiquinone oxidoreductase chain 4L (ND4L).